Reading from the N-terminus, the 260-residue chain is Thiazole synthase (260 aa).

The Schiff-base intermediate with DXP role is filled by Lys-102. 1-deoxy-D-xylulose 5-phosphate-binding positions include Gly-163, 189–190 (AG), and 211–212 (NT).

Belongs to the ThiG family. In terms of assembly, homotetramer. Forms heterodimers with either ThiH or ThiS.

The protein localises to the cytoplasm. The enzyme catalyses [ThiS sulfur-carrier protein]-C-terminal-Gly-aminoethanethioate + 2-iminoacetate + 1-deoxy-D-xylulose 5-phosphate = [ThiS sulfur-carrier protein]-C-terminal Gly-Gly + 2-[(2R,5Z)-2-carboxy-4-methylthiazol-5(2H)-ylidene]ethyl phosphate + 2 H2O + H(+). It functions in the pathway cofactor biosynthesis; thiamine diphosphate biosynthesis. Functionally, catalyzes the rearrangement of 1-deoxy-D-xylulose 5-phosphate (DXP) to produce the thiazole phosphate moiety of thiamine. Sulfur is provided by the thiocarboxylate moiety of the carrier protein ThiS. In vitro, sulfur can be provided by H(2)S. The sequence is that of Thiazole synthase from Geobacter sulfurreducens (strain ATCC 51573 / DSM 12127 / PCA).